We begin with the raw amino-acid sequence, 206 residues long: Uridine kinase (206 aa).

Residue Gly-11 to Ser-18 coordinates ATP.

It belongs to the uridine kinase family.

It is found in the cytoplasm. It carries out the reaction uridine + ATP = UMP + ADP + H(+). The catalysed reaction is cytidine + ATP = CMP + ADP + H(+). The protein operates within pyrimidine metabolism; CTP biosynthesis via salvage pathway; CTP from cytidine: step 1/3. Its pathway is pyrimidine metabolism; UMP biosynthesis via salvage pathway; UMP from uridine: step 1/1. The polypeptide is Uridine kinase (Clostridium botulinum (strain Langeland / NCTC 10281 / Type F)).